We begin with the raw amino-acid sequence, 282 residues long: ATP phosphoribosyltransferase (282 aa).

The protein belongs to the ATP phosphoribosyltransferase family. Long subfamily. It depends on Mg(2+) as a cofactor.

It localises to the cytoplasm. The catalysed reaction is 1-(5-phospho-beta-D-ribosyl)-ATP + diphosphate = 5-phospho-alpha-D-ribose 1-diphosphate + ATP. Its pathway is amino-acid biosynthesis; L-histidine biosynthesis; L-histidine from 5-phospho-alpha-D-ribose 1-diphosphate: step 1/9. With respect to regulation, feedback inhibited by histidine. In terms of biological role, catalyzes the condensation of ATP and 5-phosphoribose 1-diphosphate to form N'-(5'-phosphoribosyl)-ATP (PR-ATP). Has a crucial role in the pathway because the rate of histidine biosynthesis seems to be controlled primarily by regulation of HisG enzymatic activity. In Pyrobaculum calidifontis (strain DSM 21063 / JCM 11548 / VA1), this protein is ATP phosphoribosyltransferase.